The primary structure comprises 147 residues: Lipoprotein YafY (147 aa).

Positions 1–20 (MKRKTLPLLALVATTLFLIA) are cleaved as a signal peptide. Cys21 carries the N-palmitoyl cysteine lipid modification. Cys21 carries the S-diacylglycerol cysteine lipid modification.

To E.coli YfjS.

It is found in the cell inner membrane. In terms of biological role, when overproduced strongly induces degP through the activation of the two-component envelope stress response system CpxA/CpxR. In Escherichia coli (strain K12), this protein is Lipoprotein YafY (yafY).